The sequence spans 341 residues: Pre-mRNA-processing protein 45 (341 aa).

3 disordered regions span residues 1–31 (MFSSLLPKPKYSSHEPTSRIKLKKVRAHEKS), 181–226 (NYQE…EDQA), and 302–341 (EQHEKENKLKELADIARSKKLNNKRPPNGDYDDVKKKTKY). Basic residues predominate over residues 192–201 (FKLRKNRHKN). Basic and acidic residues predominate over residues 302–318 (EQHEKENKLKELADIAR).

The protein belongs to the SNW family. Associated with the spliceosome.

Its subcellular location is the nucleus. Functionally, involved in pre-mRNA splicing. The protein is Pre-mRNA-processing protein 45 (PRP45) of Debaryomyces hansenii (strain ATCC 36239 / CBS 767 / BCRC 21394 / JCM 1990 / NBRC 0083 / IGC 2968) (Yeast).